The sequence spans 353 residues: Phosphoribosylformylglycinamidine cyclo-ligase (353 aa).

The protein belongs to the AIR synthase family.

It is found in the cytoplasm. The catalysed reaction is 2-formamido-N(1)-(5-O-phospho-beta-D-ribosyl)acetamidine + ATP = 5-amino-1-(5-phospho-beta-D-ribosyl)imidazole + ADP + phosphate + H(+). It functions in the pathway purine metabolism; IMP biosynthesis via de novo pathway; 5-amino-1-(5-phospho-D-ribosyl)imidazole from N(2)-formyl-N(1)-(5-phospho-D-ribosyl)glycinamide: step 2/2. The sequence is that of Phosphoribosylformylglycinamidine cyclo-ligase from Symbiobacterium thermophilum (strain DSM 24528 / JCM 14929 / IAM 14863 / T).